The chain runs to 536 residues: ADP,ATP carrier protein 4 (536 aa).

Transmembrane regions (helical) follow at residues 44 to 64 (VLLFSLLFALLSYIDAFLYVL), 77 to 97 (SILFIKSVLVLPMTFFFIVIV), 109 to 129 (MLEVILIISSVFFLLFGFVIW), 172 to 194 (TMLYLVAELWGSLIISFMFFSRA), 205 to 225 (KFLPTISLISAVVFLSSGLLT), 244 to 264 (FSQVFIVTSALTVMSAITSFF), 309 to 329 (VVAASVCSNIFEAIYRGGIVL), 349 to 369 (AQIITSIFLLVMFFKPATHLI), and 378 to 398 (AITAPIVAIITLVLFFPMVFF). 2 N-linked (GlcNAc...) asparagine glycosylation sites follow: Asn400 and Asn421. 2 consecutive transmembrane segments (helical) span residues 465–485 (LGINIGKTIGSVYCTLVTVVF) and 493–513 (VVSVSTVFVGVFCVIWIRSIL).

This sequence belongs to the ADP/ATP translocase tlc family.

It is found in the cell membrane. Its function is as follows. ATP transporter involved in the uptake of ATP from the host cell cytoplasm. Provides the microsporidian cell with host ATP in exchange for ADP. This is an obligate exchange system. This energy acquiring activity is an important component of microsporidian parasitism. The polypeptide is ADP,ATP carrier protein 4 (NTT4) (Encephalitozoon cuniculi (strain GB-M1) (Microsporidian parasite)).